The sequence spans 241 residues: Ribose-5-phosphate isomerase A (241 aa).

Substrate contacts are provided by residues 29 to 32, 84 to 87, and 97 to 100; these read TGTT, DGAD, and KGGG. Catalysis depends on Glu-106, which acts as the Proton acceptor. Lys-124 contacts substrate.

This sequence belongs to the ribose 5-phosphate isomerase family. In terms of assembly, homodimer.

The catalysed reaction is aldehydo-D-ribose 5-phosphate = D-ribulose 5-phosphate. It participates in carbohydrate degradation; pentose phosphate pathway; D-ribose 5-phosphate from D-ribulose 5-phosphate (non-oxidative stage): step 1/1. Its function is as follows. Catalyzes the reversible conversion of ribose-5-phosphate to ribulose 5-phosphate. This Thermoplasma volcanium (strain ATCC 51530 / DSM 4299 / JCM 9571 / NBRC 15438 / GSS1) protein is Ribose-5-phosphate isomerase A.